The following is a 189-amino-acid chain: Elongation factor P (189 aa).

This sequence belongs to the elongation factor P family.

The protein resides in the cytoplasm. The protein operates within protein biosynthesis; polypeptide chain elongation. Functionally, involved in peptide bond synthesis. Stimulates efficient translation and peptide-bond synthesis on native or reconstituted 70S ribosomes in vitro. Probably functions indirectly by altering the affinity of the ribosome for aminoacyl-tRNA, thus increasing their reactivity as acceptors for peptidyl transferase. In Pseudomonas putida (strain GB-1), this protein is Elongation factor P.